A 106-amino-acid chain; its full sequence is MKVLVVVALLVTLISYSSSEGIDDPEADELLSLMANEQTRKECIPKHHECTSNKHGCCRGNFFKYKCQCTTVVTQDGEQTERCFCGTPPHHKAAELVVGFGKKIFG.

An N-terminal signal peptide occupies residues 1–19 (MKVLVVVALLVTLISYSSS). Positions 20–40 (EGIDDPEADELLSLMANEQTR) are excised as a propeptide. Disulfide bonds link Cys43–Cys58, Cys50–Cys67, Cys57–Cys85, and Cys69–Cys83.

This sequence belongs to the neurotoxin 19 (CSTX) family. 04 (U1-Lctx) subfamily. As to expression, expressed by the venom gland.

Its subcellular location is the secreted. This is U1-lycotoxin-Ls1b from Lycosa singoriensis (Wolf spider).